A 415-amino-acid polypeptide reads, in one-letter code: Small RNA 2'-O-methyltransferase (415 aa).

2 residues coordinate S-adenosyl-L-methionine: Ser99 and Asp117. Mg(2+) contacts are provided by Glu169, Glu172, and His173.

This sequence belongs to the methyltransferase superfamily. HEN1 family. Mg(2+) is required as a cofactor.

It localises to the cytoplasm. The enzyme catalyses small RNA 3'-end nucleotide + S-adenosyl-L-methionine = small RNA 3'-end 2'-O-methylnucleotide + S-adenosyl-L-homocysteine + H(+). Functionally, methyltransferase that adds a 2'-O-methyl group at the 3'-end of piRNAs, a class of 24 to 30 nucleotide RNAs that are generated by a Dicer-independent mechanism and are primarily derived from transposons and other repeated sequence elements. This probably protects the 3'-end of piRNAs from uridylation activity and subsequent degradation. Stabilization of piRNAs is essential for gametogenesis. This chain is Small RNA 2'-O-methyltransferase, found in Bombyx mori (Silk moth).